The sequence spans 99 residues: DNA-directed RNA polymerase subunit Rpo11 (99 aa).

It belongs to the archaeal Rpo11/eukaryotic RPB11/RPC19 RNA polymerase subunit family. As to quaternary structure, part of the RNA polymerase complex. Forms an Rpo3-Rpo10-Rpo11-Rpo12 complex upon coexpression.

It is found in the cytoplasm. It catalyses the reaction RNA(n) + a ribonucleoside 5'-triphosphate = RNA(n+1) + diphosphate. DNA-dependent RNA polymerase (RNAP) catalyzes the transcription of DNA into RNA using the four ribonucleoside triphosphates as substrates. This Methanocaldococcus jannaschii (strain ATCC 43067 / DSM 2661 / JAL-1 / JCM 10045 / NBRC 100440) (Methanococcus jannaschii) protein is DNA-directed RNA polymerase subunit Rpo11.